A 275-amino-acid polypeptide reads, in one-letter code: NH(3)-dependent NAD(+) synthetase (275 aa).

50–57 (GISGGVDS) contacts ATP. Asp56 contacts Mg(2+). Arg147 is a deamido-NAD(+) binding site. Thr167 contacts ATP. A Mg(2+)-binding site is contributed by Glu172. Residues Lys180 and Asp187 each coordinate deamido-NAD(+). Lys196 and Thr218 together coordinate ATP. Residue 267 to 268 (HK) coordinates deamido-NAD(+).

Belongs to the NAD synthetase family. Homodimer.

The enzyme catalyses deamido-NAD(+) + NH4(+) + ATP = AMP + diphosphate + NAD(+) + H(+). It functions in the pathway cofactor biosynthesis; NAD(+) biosynthesis; NAD(+) from deamido-NAD(+) (ammonia route): step 1/1. In terms of biological role, catalyzes the ATP-dependent amidation of deamido-NAD to form NAD. Uses ammonia as a nitrogen source. The sequence is that of NH(3)-dependent NAD(+) synthetase from Stutzerimonas stutzeri (strain A1501) (Pseudomonas stutzeri).